We begin with the raw amino-acid sequence, 201 residues long: Ribonuclease MRP protein subunit RMP1 (201 aa).

A helical transmembrane segment spans residues 86–108; sequence YWQFNGVIALGQFVTLGCTLVTL.

In terms of assembly, component of RNase MRP complex which consists of an RNA moiety and at least 10 protein subunits including POP1, POP3, POP4, POP5, POP6, POP7, POP8, RMP1, RPP1 and SNM1, many of which are shared with the RNase P complex.

The protein resides in the membrane. The protein localises to the cytoplasm. Its subcellular location is the nucleus. Functions as part of ribonuclease MRP (RNase MRP), which is involved in rRNA processing in mitochondria. The polypeptide is Ribonuclease MRP protein subunit RMP1 (Saccharomyces cerevisiae (strain ATCC 204508 / S288c) (Baker's yeast)).